We begin with the raw amino-acid sequence, 444 residues long: MGIKIGLVSLGCPKNLVDSEIMLGILKKAGYEITAREKEADVLIVNTCSFINDAKEESIRTIIELARNKINGRCRAILVAGCLAQRYPAELMAEMPEIDGLVGTGQVPEIARAVRRVLEGGKVLLTGSPGYLHDAYFPKVLATPPYTAYLKIAEGCDNRCSYCVIPAVRGPFRSRRMEDIMSEAEELANKGVKELIIVAQDTTRYGIDLYGKPMLDALLEGLTGIKGPVWLRLLYTYPSLITDDLIYLMAKSRKICRYLDIPFQHASNRVLQLMNRRGSKEEAARLVAKLRADIPGIVLRTTFIVGFPGETEEDFQELLDFMAEAKFDRAGVFTYSREEGTAAAEMPGQVPEEVKLLRRERAMMLQQEISLQKNLKRVGEVIEVLVEGKSLKGRGMYTGRSEGDAPGIDGKVFFKSGFNLQPGDFARVLIKGGTEYDLTGETVL.

The region spanning Ile-3 to Glu-119 is the MTTase N-terminal domain. Residues Cys-12, Cys-48, Cys-82, Cys-156, Cys-160, and Cys-163 each contribute to the [4Fe-4S] cluster site. The region spanning Ala-142–Gln-372 is the Radical SAM core domain. A TRAM domain is found at Leu-375–Leu-444.

It belongs to the methylthiotransferase family. RimO subfamily. [4Fe-4S] cluster is required as a cofactor.

Its subcellular location is the cytoplasm. The catalysed reaction is L-aspartate(89)-[ribosomal protein uS12]-hydrogen + (sulfur carrier)-SH + AH2 + 2 S-adenosyl-L-methionine = 3-methylsulfanyl-L-aspartate(89)-[ribosomal protein uS12]-hydrogen + (sulfur carrier)-H + 5'-deoxyadenosine + L-methionine + A + S-adenosyl-L-homocysteine + 2 H(+). Its function is as follows. Catalyzes the methylthiolation of an aspartic acid residue of ribosomal protein uS12. This Pelotomaculum thermopropionicum (strain DSM 13744 / JCM 10971 / SI) protein is Ribosomal protein uS12 methylthiotransferase RimO.